A 333-amino-acid chain; its full sequence is Cap-specific mRNA (nucleoside-2'-O-)-methyltransferase (333 aa).

Tyr22 is a binding site for mRNA. S-adenosyl-L-methionine-binding residues include Gln39, Tyr66, Gly68, Gly72, Asp95, Arg97, Val116, and Asp138. Positions Pro169–Val249 are binding to NPH-I. The tract at residues Pro169–Lys333 is binding to Rap94. Residue Lys175 is the For methyltransferase activity of the active site. MRNA contacts are provided by residues Arg177–Phe180, Asp182, Ser205–Glu207, and Glu233.

The protein belongs to the class I-like SAM-binding methyltransferase superfamily. Poxvirus/kinetoplastid 2'-O-MTase family. In terms of assembly, interacts with poly(A) polymerase catalytic subunit OPG063. Interacts with OPG109 and OPG123; these interactions might help linking transcription to capping and polyadenylation.

It localises to the virion. The catalysed reaction is a 5'-end (N(7)-methyl 5'-triphosphoguanosine)-ribonucleoside in mRNA + S-adenosyl-L-methionine = a 5'-end (N(7)-methyl 5'-triphosphoguanosine)-(2'-O-methyl-ribonucleoside) in mRNA + S-adenosyl-L-homocysteine + H(+). Its function is as follows. Displays methyltransferase, positive regulation of the poly(A) polymerase and transcription elongation activities. Involved in the modification of both mRNA ends and in intermediate and late gene positive transcription elongation. At the mRNAs 5' end, methylates the ribose 2' OH group of the first transcribed nucleotide, thereby producing a 2'-O-methylpurine cap. At the 3' end, functions as a processivity factor which stimulates the activity of the viral poly(A) polymerase OPG063 that creates mRNA's poly(A) tail. In the presence of OPG102, OPG063 does not dissociate from the RNA allowing tail elongation to around 250 adenylates. The polypeptide is Cap-specific mRNA (nucleoside-2'-O-)-methyltransferase (OPG102) (Homo sapiens (Human)).